Consider the following 322-residue polypeptide: Mas-related G-protein coupled receptor member B5 (322 aa).

At 1 to 34 the chain is on the extracellular side; that stretch reads MGLTTPAWNINNTVVNGSNNTEHFSCVSKFNTLN. 3 N-linked (GlcNAc...) asparagine glycosylation sites follow: asparagine 11, asparagine 16, and asparagine 19. The helical transmembrane segment at 35–55 threads the bilayer; sequence FLTVIIAMFGLAGNAIVLWLL. Residues 56-70 are Cytoplasmic-facing; it reads AFHLPRNAFSVYVCN. Residues 71–91 traverse the membrane as a helical segment; sequence LACADFLQLCTQILGSLECFL. Residues 92 to 98 lie on the Extracellular side of the membrane; the sequence is QLNRRHT. The chain crosses the membrane as a helical span at residues 99 to 119; it reads FFLTVVFMFAYLAGLCMIAAI. At 120 to 147 the chain is on the cytoplasmic side; it reads SVERSLSVMWPIWYHCQRPRHTSSIMCA. A helical transmembrane segment spans residues 148–168; that stretch reads LLWAFCLLLNFLLGEGCGLLF. Topologically, residues 169 to 172 are extracellular; that stretch reads SDPK. A helical membrane pass occupies residues 173–193; sequence YYFCITCALITTALIILLTVV. At 194–216 the chain is on the cytoplasmic side; sequence PSVSSLALLVKMICGSHRIPVTR. Residues 217–237 form a helical membrane-spanning segment; that stretch reads FYVTIALTLVVFIFLGLPFGI. Residues 238–260 lie on the Extracellular side of the membrane; it reads YSSFLIMFKEFQSIFSYHVLEVT. A helical membrane pass occupies residues 261–281; the sequence is IFLSCVNSCANPIIYFLVGSI. Topologically, residues 282-322 are cytoplasmic; that stretch reads RQHRLQWQSLKLLLQRAMQDTPEEDSGERVPSQRSGELESV. Residues 302–322 are disordered; that stretch reads TPEEDSGERVPSQRSGELESV.

Belongs to the G-protein coupled receptor 1 family. Mas subfamily.

The protein resides in the membrane. Orphan receptor. Probably involved in the function of nociceptive neurons. May regulate nociceptor function and/or development, including the sensation or modulation of pain. This is Mas-related G-protein coupled receptor member B5 (Mrgprb5) from Mus musculus (Mouse).